Consider the following 94-residue polypeptide: Putative pterin-4-alpha-carbinolamine dehydratase (94 aa).

Belongs to the pterin-4-alpha-carbinolamine dehydratase family.

The enzyme catalyses (4aS,6R)-4a-hydroxy-L-erythro-5,6,7,8-tetrahydrobiopterin = (6R)-L-erythro-6,7-dihydrobiopterin + H2O. In Mycobacterium leprae (strain Br4923), this protein is Putative pterin-4-alpha-carbinolamine dehydratase.